The following is a 348-amino-acid chain: Small ribosomal subunit biogenesis GTPase RsgA (348 aa).

One can recognise a CP-type G domain in the interval 72 to 230; the sequence is RNQLSRPAIA…IADTPGFNQP (159 aa). GTP contacts are provided by residues 121–124 and 172–180; these read TKAD and GPSGVGKSS. Residues cysteine 255, cysteine 260, histidine 262, and cysteine 268 each contribute to the Zn(2+) site. Basic and acidic residues predominate over residues 305–322; sequence AKSDRQGQQRLEPLLDAK. Residues 305 to 348 are disordered; the sequence is AKSDRQGQQRLEPLLDAKKYRRRSRRQQHQHVNPMAEEVLDSEW. Residues 323 to 333 show a composition bias toward basic residues; sequence KYRRRSRRQQH.

The protein belongs to the TRAFAC class YlqF/YawG GTPase family. RsgA subfamily. Monomer. Associates with 30S ribosomal subunit, binds 16S rRNA. It depends on Zn(2+) as a cofactor.

Its subcellular location is the cytoplasm. Functionally, one of several proteins that assist in the late maturation steps of the functional core of the 30S ribosomal subunit. Helps release RbfA from mature subunits. May play a role in the assembly of ribosomal proteins into the subunit. Circularly permuted GTPase that catalyzes slow GTP hydrolysis, GTPase activity is stimulated by the 30S ribosomal subunit. This chain is Small ribosomal subunit biogenesis GTPase RsgA, found in Thermosynechococcus vestitus (strain NIES-2133 / IAM M-273 / BP-1).